The chain runs to 623 residues: Leucine aminopeptidase 2 (623 aa).

Residues 140 to 142 (QLE) and 266 to 271 (PYGGME) contribute to the a peptide site. His-295 contacts Zn(2+). The active-site Proton acceptor is Glu-296. The Zn(2+) site is built by His-299 and Glu-318. The Proton donor role is filled by Tyr-382.

The protein belongs to the peptidase M1 family. The cofactor is Zn(2+).

It is found in the cytoplasm. The protein localises to the nucleus. The catalysed reaction is an epoxide + H2O = an ethanediol. Functionally, aminopeptidase that preferentially cleaves di- and tripeptides. Also has low epoxide hydrolase activity (in vitro). Can hydrolyze the epoxide leukotriene LTA(4) but it forms preferentially 5,6-dihydroxy-7,9,11,14-eicosatetraenoic acid rather than the cytokine leukotriene B(4) as the product compared to the homologous mammalian enzyme (in vitro). In Eremothecium gossypii (strain ATCC 10895 / CBS 109.51 / FGSC 9923 / NRRL Y-1056) (Yeast), this protein is Leucine aminopeptidase 2.